The following is a 351-amino-acid chain: Putative ABC transporter permease protein MJ0876 (351 aa).

Transmembrane regions (helical) follow at residues 4–24 (VGIL…ALYL), 59–79 (LPPI…GLML), 99–119 (VLMV…FEIF), 124–144 (ILVA…IIAL), 152–172 (VIIV…YLIA), 196–216 (GDVI…MFLI), 249–269 (FITG…IIAP), 284–304 (LVPA…ILSL), and 322–342 (PLPI…YLVY).

This sequence belongs to the binding-protein-dependent transport system permease family. FecCD subfamily.

The protein resides in the cell membrane. Functionally, probably part of a binding-protein-dependent transport system. Probably responsible for the translocation of the substrate across the membrane. This chain is Putative ABC transporter permease protein MJ0876, found in Methanocaldococcus jannaschii (strain ATCC 43067 / DSM 2661 / JAL-1 / JCM 10045 / NBRC 100440) (Methanococcus jannaschii).